The following is a 498-amino-acid chain: ATP synthase subunit beta, chloroplastic (498 aa).

An ATP-binding site is contributed by 172–179 (GGAGVGKT).

It belongs to the ATPase alpha/beta chains family. F-type ATPases have 2 components, CF(1) - the catalytic core - and CF(0) - the membrane proton channel. CF(1) has five subunits: alpha(3), beta(3), gamma(1), delta(1), epsilon(1). CF(0) has four main subunits: a(1), b(1), b'(1) and c(9-12).

It is found in the plastid. Its subcellular location is the chloroplast thylakoid membrane. It catalyses the reaction ATP + H2O + 4 H(+)(in) = ADP + phosphate + 5 H(+)(out). In terms of biological role, produces ATP from ADP in the presence of a proton gradient across the membrane. The catalytic sites are hosted primarily by the beta subunits. This is ATP synthase subunit beta, chloroplastic from Asarum canadense (Wild ginger).